The sequence spans 126 residues: Large ribosomal subunit protein bL12 (126 aa).

It belongs to the bacterial ribosomal protein bL12 family. As to quaternary structure, homodimer. Part of the ribosomal stalk of the 50S ribosomal subunit. Forms a multimeric L10(L12)X complex, where L10 forms an elongated spine to which 2 to 4 L12 dimers bind in a sequential fashion. Binds GTP-bound translation factors.

Forms part of the ribosomal stalk which helps the ribosome interact with GTP-bound translation factors. Is thus essential for accurate translation. This is Large ribosomal subunit protein bL12 from Bifidobacterium longum (strain DJO10A).